The following is a 484-amino-acid chain: Putative transporter B0252.3 (484 aa).

Helical transmembrane passes span 43–63 (ILTC…TGLC), 95–115 (STTT…PPLA), 121–141 (LPVF…SAFS), 144–164 (IMMF…AGLA), 183–203 (VYFG…AYIL), 208–228 (YLMF…YMTV), 286–306 (MFIV…FIYF), 321–341 (LNFV…PIFM), 348–368 (VLIS…VLSS), 373–393 (IHFW…IYMF), and 433–453 (LAPA…TLIL).

The protein belongs to the major facilitator superfamily. Sugar transporter (TC 2.A.1.1) family.

The protein localises to the membrane. The protein is Putative transporter B0252.3 of Caenorhabditis elegans.